The primary structure comprises 296 residues: MILPILGGPTGSGKTSLTQVLDPKRFEIVSFDSRQVYRDLPVGTTAPTPEECSTIRHWLIGFLNANESINANQFSLLARNAIADIQSRGKIPFLLGGTGFYLRAFLLGMYPVPTVPKETKDYVFTLPLEEARSQLLAKDPKAMESLSDQDGYRIKRALEVVLTGVLWSDVSKETVGGFWKDNPEVKIVGHWLDWPREILYQRINTRVETIIRGMLEETKEVLSKYGPDCPGLRTLGYNFALAFLNGMIDSNTFIEQLAQSHRNYAKRQITWFKKESFLSPISYDAAVQLYTNIEQR.

8–15 contacts ATP; that stretch reads GPTGSGKT. 10 to 15 contributes to the substrate binding site; that stretch reads TGSGKT. The tract at residues 32 to 35 is interaction with substrate tRNA; sequence DSRQ.

This sequence belongs to the IPP transferase family. In terms of assembly, monomer. Mg(2+) serves as cofactor.

It catalyses the reaction adenosine(37) in tRNA + dimethylallyl diphosphate = N(6)-dimethylallyladenosine(37) in tRNA + diphosphate. Catalyzes the transfer of a dimethylallyl group onto the adenine at position 37 in tRNAs that read codons beginning with uridine, leading to the formation of N6-(dimethylallyl)adenosine (i(6)A). The protein is tRNA dimethylallyltransferase of Leptospira biflexa serovar Patoc (strain Patoc 1 / Ames).